A 201-amino-acid chain; its full sequence is UPF0301 protein MAP_0045 (201 aa).

The protein belongs to the UPF0301 (AlgH) family.

This Mycolicibacterium paratuberculosis (strain ATCC BAA-968 / K-10) (Mycobacterium paratuberculosis) protein is UPF0301 protein MAP_0045.